Here is a 150-residue protein sequence, read N- to C-terminus: D-aminoacyl-tRNA deacylase (150 aa).

The short motif at 138-139 (GP) is the Gly-cisPro motif, important for rejection of L-amino acids element.

This sequence belongs to the DTD family. As to quaternary structure, homodimer.

The protein resides in the cytoplasm. The catalysed reaction is glycyl-tRNA(Ala) + H2O = tRNA(Ala) + glycine + H(+). The enzyme catalyses a D-aminoacyl-tRNA + H2O = a tRNA + a D-alpha-amino acid + H(+). In terms of biological role, an aminoacyl-tRNA editing enzyme that deacylates mischarged D-aminoacyl-tRNAs. Also deacylates mischarged glycyl-tRNA(Ala), protecting cells against glycine mischarging by AlaRS. Acts via tRNA-based rather than protein-based catalysis; rejects L-amino acids rather than detecting D-amino acids in the active site. By recycling D-aminoacyl-tRNA to D-amino acids and free tRNA molecules, this enzyme counteracts the toxicity associated with the formation of D-aminoacyl-tRNA entities in vivo and helps enforce protein L-homochirality. In Chlorobium phaeobacteroides (strain DSM 266 / SMG 266 / 2430), this protein is D-aminoacyl-tRNA deacylase.